Consider the following 129-residue polypeptide: Large ribosomal subunit protein bL17 (129 aa).

This sequence belongs to the bacterial ribosomal protein bL17 family. In terms of assembly, part of the 50S ribosomal subunit. Contacts protein L32.

In Buchnera aphidicola subsp. Baizongia pistaciae (strain Bp), this protein is Large ribosomal subunit protein bL17.